The sequence spans 38 residues: Large ribosomal subunit protein bL36A (38 aa).

Belongs to the bacterial ribosomal protein bL36 family.

The polypeptide is Large ribosomal subunit protein bL36A (Enterobacter sp. (strain 638)).